We begin with the raw amino-acid sequence, 345 residues long: DNA-directed RNA polymerase subunit alpha (345 aa).

Positions 1–241 are alpha N-terminal domain (alpha-NTD); that stretch reads MLRDTHLALQ…DQLGMFINFE (241 aa). Residues 257-345 are alpha C-terminal domain (alpha-CTD); the sequence is FNPNLLRKVD…ELVKRSDNPF (89 aa).

The protein belongs to the RNA polymerase alpha chain family. As to quaternary structure, homodimer. The RNAP catalytic core consists of 2 alpha, 1 beta, 1 beta' and 1 omega subunit. When a sigma factor is associated with the core the holoenzyme is formed, which can initiate transcription.

It carries out the reaction RNA(n) + a ribonucleoside 5'-triphosphate = RNA(n+1) + diphosphate. Its function is as follows. DNA-dependent RNA polymerase catalyzes the transcription of DNA into RNA using the four ribonucleoside triphosphates as substrates. This Acidiphilium cryptum (strain JF-5) protein is DNA-directed RNA polymerase subunit alpha.